A 400-amino-acid polypeptide reads, in one-letter code: Gap junction alpha-8 protein (400 aa).

An intramembrane segment occupies 2–12; the sequence is GDWSFLGNILE. The Cytoplasmic portion of the chain corresponds to 13–21; that stretch reads QVNEQSTVI. A helical transmembrane segment spans residues 22 to 42; the sequence is GRVWLTVLFIFRILILGTAAE. The Extracellular portion of the chain corresponds to 43–71; the sequence is LVWGDEQSDFVCNTQQPGCENVCYDEAFP. 3 cysteine pairs are disulfide-bonded: cysteine 54-cysteine 196, cysteine 61-cysteine 190, and cysteine 65-cysteine 185. Residues 72–92 traverse the membrane as a helical segment; the sequence is ISHIRLWVLQIIFVSTPSLVY. Residues 93-156 are Cytoplasmic-facing; that stretch reads FGHAVHHVRM…GTLLRTYILH (64 aa). Basic and acidic residues predominate over residues 104-118; it reads EKRKEREEAERRQQA. The interval 104–139 is disordered; the sequence is EKRKEREEAERRQQAEVDEEKLPLAPNQNKGNNPDG. Residues 129–138 are compositionally biased toward polar residues; it reads PNQNKGNNPD. Residues 157–177 form a helical membrane-spanning segment; that stretch reads IIFKTLFEVGFIVGQYFLYGF. The Extracellular portion of the chain corresponds to 178–205; the sequence is RILPLYRCGRWPCPNLVDCFVSRPTEKT. The chain crosses the membrane as a helical span at residues 206–226; that stretch reads IFIMFMLVVAAVSLFLNLVEI. The Cytoplasmic segment spans residues 227-400; that stretch reads SHLILKRIRR…SRARSDDLTV (174 aa). The tract at residues 323–400 is disordered; sequence YAQAKEPEEE…SRARSDDLTV (78 aa). Residues 327–336 show a composition bias toward basic and acidic residues; the sequence is KEPEEEKVKA. The span at 337–346 shows a compositional bias: acidic residues; sequence EEEEEQEEEQ. Serine 364 bears the Phosphoserine; by CK2 mark. Positions 381-392 are enriched in low complexity; the sequence is RSLSRLSKASSR.

Belongs to the connexin family. Alpha-type (group II) subfamily. As to quaternary structure, a hemichannel or connexon is composed of a hexamer of connexins. A functional gap junction is formed by the apposition of two hemichannels. Forms heteromeric channels with GJA3. During early stages of lens development, interacts with the C-terminus of MIP. In terms of processing, proteolytically cleaved by caspase-3 during lens development. Phosphorylated on Ser-364; which inhibits cleavage by caspase-3.

Its subcellular location is the cell membrane. It is found in the cell junction. The protein resides in the gap junction. Its function is as follows. Structural component of eye lens gap junctions. Gap junctions are dodecameric channels that connect the cytoplasm of adjoining cells. They are formed by the docking of two hexameric hemichannels, one from each cell membrane. Small molecules and ions diffuse from one cell to a neighboring cell via the central pore. This is Gap junction alpha-8 protein (GJA8) from Gallus gallus (Chicken).